Reading from the N-terminus, the 408-residue chain is Putative glutamate--cysteine ligase 2 (408 aa).

It belongs to the glutamate--cysteine ligase type 2 family. YbdK subfamily.

It carries out the reaction L-cysteine + L-glutamate + ATP = gamma-L-glutamyl-L-cysteine + ADP + phosphate + H(+). ATP-dependent carboxylate-amine ligase which exhibits weak glutamate--cysteine ligase activity. The polypeptide is Putative glutamate--cysteine ligase 2 (Bradyrhizobium sp. (strain ORS 278)).